A 312-amino-acid polypeptide reads, in one-letter code: Homoserine O-acetyltransferase (312 aa).

Cysteine 142 acts as the Acyl-thioester intermediate in catalysis. Substrate is bound by residues lysine 163 and serine 192. The Proton acceptor role is filled by histidine 235. Glutamate 237 is a catalytic residue. Position 249 (arginine 249) interacts with substrate.

This sequence belongs to the MetA family.

It is found in the cytoplasm. The catalysed reaction is L-homoserine + acetyl-CoA = O-acetyl-L-homoserine + CoA. The protein operates within amino-acid biosynthesis; L-methionine biosynthesis via de novo pathway; O-acetyl-L-homoserine from L-homoserine: step 1/1. Transfers an acetyl group from acetyl-CoA to L-homoserine, forming acetyl-L-homoserine. This is Homoserine O-acetyltransferase from Ruegeria sp. (strain TM1040) (Silicibacter sp.).